The sequence spans 239 residues: MDERSLTFHIGPVWFDGTVCMMVLLTCLIVFFLVYFFTRNLKMKPTGKQNALEWVIDFTRGIVTDNLPRKELNNFHLLAFTLFLFVFVANNIGLITKIVLPSETTLWKSPTADPFVTLTLAFIMITLTHLFGVKKLGFKGYFVNSFLKPYSFMFPMKLIEEFTNLLTLALRLYGNIYAGEVLLTLIANMMNNLGWFSLPLAIPLEMVWIAFSLFIGSIQAFVFVTLSMVYMSHKIEVEE.

Helical transmembrane passes span 17–37, 75–95, 113–133, 182–202, and 206–226; these read GTVC…VYFF, FHLL…IGLI, DPFV…LFGV, LLTL…PLAI, and MVWI…FVTL.

The protein belongs to the ATPase A chain family. F-type ATPases have 2 components, CF(1) - the catalytic core - and CF(0) - the membrane proton channel. CF(1) has five subunits: alpha(3), beta(3), gamma(1), delta(1), epsilon(1). CF(0) has three main subunits: a(1), b(2) and c(9-12). The alpha and beta chains form an alternating ring which encloses part of the gamma chain. CF(1) is attached to CF(0) by a central stalk formed by the gamma and epsilon chains, while a peripheral stalk is formed by the delta and b chains.

The protein resides in the cell membrane. Functionally, key component of the proton channel; it plays a direct role in the translocation of protons across the membrane. In Enterococcus hirae (strain ATCC 9790 / DSM 20160 / JCM 8729 / LMG 6399 / NBRC 3181 / NCIMB 6459 / NCDO 1258 / NCTC 12367 / WDCM 00089 / R), this protein is ATP synthase subunit a.